The chain runs to 221 residues: MARMRVMVRERIDGVRPDTLWFLSHPPVYTVGKRTPPEHRPLAGLGIPVHETNRGGLLTYHAPGQLVGYVMCHIGAMNAVVPFLRLLEARLVDTVEALGIPAERRDTPPGSVELTGVWTRRTNRKIASIGLRCTRKVTSHGFALNVDCDMRPWTWATPCGMPEVEMTSVQRELTDAGHAVPSMAEVREIAAEMLGARNAPHPPAPNLSSGDLGTGTRAGRT.

Residues 14–202 (GVRPDTLWFL…MLGARNAPHP (189 aa)) enclose the BPL/LPL catalytic domain. Residues 54 to 61 (RGGLLTYH), 128 to 130 (SIG), and 141 to 143 (GFA) contribute to the substrate site. Cys-159 functions as the Acyl-thioester intermediate in the catalytic mechanism. The disordered stretch occupies residues 197-221 (RNAPHPPAPNLSSGDLGTGTRAGRT).

The protein belongs to the LipB family.

The protein localises to the cytoplasm. The enzyme catalyses octanoyl-[ACP] + L-lysyl-[protein] = N(6)-octanoyl-L-lysyl-[protein] + holo-[ACP] + H(+). The protein operates within protein modification; protein lipoylation via endogenous pathway; protein N(6)-(lipoyl)lysine from octanoyl-[acyl-carrier-protein]: step 1/2. Catalyzes the transfer of endogenously produced octanoic acid from octanoyl-acyl-carrier-protein onto the lipoyl domains of lipoate-dependent enzymes. Lipoyl-ACP can also act as a substrate although octanoyl-ACP is likely to be the physiological substrate. The protein is Octanoyltransferase of Frankia casuarinae (strain DSM 45818 / CECT 9043 / HFP020203 / CcI3).